The following is a 163-amino-acid chain: Nucleotide-binding protein GK0742 (163 aa).

The protein belongs to the YajQ family.

In terms of biological role, nucleotide-binding protein. The sequence is that of Nucleotide-binding protein GK0742 from Geobacillus kaustophilus (strain HTA426).